The primary structure comprises 591 residues: Serine/threonine-protein kinase PAK 4 (591 aa).

Positions 11 to 24 (ISAPSNFEHRVHTG) constitute a CRIB domain. The segment at 25 to 320 (FDQHEQKFTG…VVDPGDPRSY (296 aa)) is linker. Serine 41 carries the post-translational modification Phosphoserine. Position 78 is an N6-methyllysine (lysine 78). Residues 95-301 (TRSNSLRRDS…PQREPQRVSH (207 aa)) are disordered. Phosphoserine occurs at positions 104 and 148. Residues 149–164 (GDRRRAGPEKRPKSSR) show a composition bias toward basic and acidic residues. 2 positions are modified to phosphoserine: serine 167 and serine 181. Threonine 187 carries the phosphothreonine modification. Low complexity predominate over residues 191–202 (AGLASGAKLAAG). Serine 195 is modified (phosphoserine). Position 207 is a phosphothreonine (threonine 207). The segment covering 242–260 (SSSSSSRPPTRARGAPSPG) has biased composition (low complexity). Serine 258 and serine 267 each carry phosphoserine. Over residues 271 to 290 (LAPPACTPAAPAVPGPPGPR) the composition is skewed to pro residues. The residue at position 291 (serine 291) is a Phosphoserine. A compositionally biased stretch (basic and acidic residues) spans 292–301 (PQREPQRVSH). The GEF-interaction domain (GID) stretch occupies residues 298-323 (RVSHEQFRAALQLVVDPGDPRSYLDN). One can recognise a Protein kinase domain in the interval 321–572 (LDNFIKIGEG…AAELLKHPFL (252 aa)). ATP contacts are provided by residues 327–335 (IGEGSTGIV), lysine 350, and 396–398 (EFL). Aspartate 440 serves as the catalytic Proton acceptor. 458-460 (DFG) lines the ATP pocket. Serine 474 is subject to Phosphoserine; by autocatalysis.

It belongs to the protein kinase superfamily. STE Ser/Thr protein kinase family. STE20 subfamily. Interacts with FGFR2 and GRB2. Interacts tightly with GTP-bound but not GDP-bound CDC42/p21 and weakly with RAC1. Interacts with INKA1. Interacts with SH3RF2. Interacts with RHOU and PAXI; the PAK4-RHOU complex protects RHOU from ubiquitination and acts as a scaffold to suppport paxillin/PAXI phosphorylation. In terms of processing, autophosphorylated on serine residues when activated by CDC42/p21. Phosphorylated on tyrosine residues upon stimulation of FGFR2. Methylated by SETD6. Post-translationally, polyubiquitinated, leading to its proteasomal degradation. Highest expression in prostate, testis and colon.

It localises to the cytoplasm. It catalyses the reaction L-seryl-[protein] + ATP = O-phospho-L-seryl-[protein] + ADP + H(+). The enzyme catalyses L-threonyl-[protein] + ATP = O-phospho-L-threonyl-[protein] + ADP + H(+). With respect to regulation, inhibited by INKA1; which inhibits the serine/threonine-protein kinase activity by binding PAK4 in a substrate-like manner. Serine/threonine-protein kinase that plays a role in a variety of different signaling pathways including cytoskeleton regulation, cell adhesion turnover, cell migration, growth, proliferation or cell survival. Activation by various effectors including growth factor receptors or active CDC42 and RAC1 results in a conformational change and a subsequent autophosphorylation on several serine and/or threonine residues. Phosphorylates and inactivates the protein phosphatase SSH1, leading to increased inhibitory phosphorylation of the actin binding/depolymerizing factor cofilin. Decreased cofilin activity may lead to stabilization of actin filaments. Phosphorylates LIMK1, a kinase that also inhibits the activity of cofilin. Phosphorylates integrin beta5/ITGB5 and thus regulates cell motility. Phosphorylates ARHGEF2 and activates the downstream target RHOA that plays a role in the regulation of assembly of focal adhesions and actin stress fibers. Stimulates cell survival by phosphorylating the BCL2 antagonist of cell death BAD. Alternatively, inhibits apoptosis by preventing caspase-8 binding to death domain receptors in a kinase independent manner. Plays a role in cell-cycle progression by controlling levels of the cell-cycle regulatory protein CDKN1A and by phosphorylating RAN. Promotes kinase-independent stabilization of RHOU, thereby contributing to focal adhesion disassembly during cell migration. This Homo sapiens (Human) protein is Serine/threonine-protein kinase PAK 4.